Reading from the N-terminus, the 271-residue chain is Zinc-finger homeodomain protein 8 (271 aa).

Phosphoserine is present on serine 16. The ZF-HD dimerization-type; degenerate zinc finger occupies tyrosine 56–glutamate 107. Positions histidine 125–proline 154 are disordered. Residues arginine 179–alanine 242 constitute a DNA-binding region (homeobox).

In terms of assembly, homo- and heterodimer with other ZFHD proteins. Interacts with MIF1, MIF2 and MIF3; these interactions prevent nuclear localization and DNA-binding to inhibit transcription regulation activity. Binds to ZHD1, ZHD2, ZHD4, ZHD10 and ZHD11. Interacts with HIPP30. In terms of tissue distribution, mostly expressed in flowers and inflorescence.

The protein resides in the nucleus. Functionally, putative transcription factor. The polypeptide is Zinc-finger homeodomain protein 8 (ZHD8) (Arabidopsis thaliana (Mouse-ear cress)).